Here is a 142-residue protein sequence, read N- to C-terminus: Large ribosomal subunit protein uL13 (142 aa).

This sequence belongs to the universal ribosomal protein uL13 family. As to quaternary structure, part of the 50S ribosomal subunit.

In terms of biological role, this protein is one of the early assembly proteins of the 50S ribosomal subunit, although it is not seen to bind rRNA by itself. It is important during the early stages of 50S assembly. This is Large ribosomal subunit protein uL13 from Paraburkholderia phytofirmans (strain DSM 17436 / LMG 22146 / PsJN) (Burkholderia phytofirmans).